A 211-amino-acid chain; its full sequence is ATP phosphoribosyltransferase (211 aa).

This sequence belongs to the ATP phosphoribosyltransferase family. Short subfamily. As to quaternary structure, heteromultimer composed of HisG and HisZ subunits.

It localises to the cytoplasm. It carries out the reaction 1-(5-phospho-beta-D-ribosyl)-ATP + diphosphate = 5-phospho-alpha-D-ribose 1-diphosphate + ATP. Its pathway is amino-acid biosynthesis; L-histidine biosynthesis; L-histidine from 5-phospho-alpha-D-ribose 1-diphosphate: step 1/9. Its function is as follows. Catalyzes the condensation of ATP and 5-phosphoribose 1-diphosphate to form N'-(5'-phosphoribosyl)-ATP (PR-ATP). Has a crucial role in the pathway because the rate of histidine biosynthesis seems to be controlled primarily by regulation of HisG enzymatic activity. This is ATP phosphoribosyltransferase from Pseudomonas fluorescens (strain SBW25).